Reading from the N-terminus, the 1129-residue chain is Protein LANA1 (1129 aa).

Disordered stretches follow at residues 1 to 988 (MAPP…PVPY) and 1110 to 1129 (LPLTQPGENQGPGDSPQEMT). 2 stretches are compositionally biased toward basic and acidic residues: residues 28–41 (RSPERCDLGDDLHL) and 48–58 (VADSVDGRECG). A compositionally biased stretch (pro residues) spans 85–104 (PVAPIPSPAPATPLPPPALL). Residues 139 to 156 (SPESSQRPPLSSPTGRPD) are compositionally biased toward polar residues. The span at 161-185 (MRPPPSQQTTPPHSPTTPPPEPPSK) shows a compositional bias: pro residues. The segment covering 186-197 (SSPDSLAPSTLR) has biased composition (low complexity). A compositionally biased stretch (polar residues) spans 207–217 (PQGPSTLNPIC). A compositionally biased stretch (low complexity) spans 263–275 (PISIGSSSPSEGS). Composition is skewed to basic and acidic residues over residues 292-301 (EASKNEKECS) and 314-323 (EISKESQVDK). Over residues 324-419 (DDNDNKDDEE…DKKEDEEDGG (96 aa)) the composition is skewed to acidic residues. The segment covering 431 to 471 (QQQQEPQQQEPQQQEPQQQEPQQQEPQQQEPQQQEPQQQEP) has biased composition (low complexity). The span at 472 to 528 (QQREPQQREPQQREPQQREPQQREPQQREPQQREPQQREPQQREPQQREPQQREPQQ) shows a compositional bias: basic and acidic residues. Residues 529–596 (REPQQQEPQQ…QQQEPQQQDE (68 aa)) are compositionally biased toward low complexity. Residues 597–888 (QQQDEQQQDE…QELEEVEEQE (292 aa)) are compositionally biased toward acidic residues. The segment covering 924–934 (THEQIASSPPG) has biased composition (polar residues). Basic residues predominate over residues 962 to 979 (PGVRMRRVPVTHPKKPHP). The DNA-binding domain stretch occupies residues 1008–1129 (FLGKDGRRDP…GPGDSPQEMT (122 aa)).

In terms of assembly, homooligomer. Interacts with host BRD2. Interacts with host RELA, ELOB, ELOC and CUL5; these interactions induce the proteasomal degradation of host RELA. Interacts with host TRIM28 and NFE2L2/NRF2; these interactions are essential for the shutdown of lytic gene expression during the early stage of infection. Interacts (via N-terminus) with host histones H2A and H2B; these interactions are essential to dock LANA1 onto chromosomes. Interacts with host BUB1 and PCNA. Interacts with host NAP1L1; this interaction is required for LANA1-dependent DNA replication. Interacts with components of the host MLL1 complex KMT2A and WDR5.

The protein resides in the host nucleus. Its function is as follows. Multifunctional protein that plays a role in the replication and long-term persistence of the viral episomal genome in dividing cells. Binds to mitotic chromosomes via its N-terminal region and to a 16-bp imperfect palindrome within the origin of replication (oriP) located in the viral terminal repeat (TR) through its C-terminal. Tethers viral episomes to chromosomes during mitosis. Plays a critical role in the shutdown of lytic gene expression during the early stage of infection by interacting with host TRIM28. Also plays a role in the repression of host NF-kappa-B activity upon TNF-alpha stimulation by promoting the proteasomal degradation of host RELA. Promotes nuclear localization and cleavage of host STAT6 leading to constitutive activation of the IL13/STAT6 signaling pathway to promote viral latency. Interacts with and modulates the histone methyltransferase MLL1 complex activity, leading to its recruitment on viral DNA terminal repeats changing the dynamic of histone H3 methylated 'Lys-4'(H3K4me) profile during the initial hours following infection. The protein is Protein LANA1 (LANA1) of Homo sapiens (Human).